A 379-amino-acid polypeptide reads, in one-letter code: Cystathionine gamma-lyase (379 aa).

The residue at position 195 (lysine 195) is an N6-(pyridoxal phosphate)lysine.

Belongs to the trans-sulfuration enzymes family. It depends on pyridoxal 5'-phosphate as a cofactor.

The enzyme catalyses L,L-cystathionine + H2O = 2-oxobutanoate + L-cysteine + NH4(+). The catalysed reaction is L-homocysteine + H2O = 2-oxobutanoate + hydrogen sulfide + NH4(+) + H(+). Functionally, catalyzes the conversion of cystathionine to cysteine, and homocysteine to sulfide. The protein is Cystathionine gamma-lyase (mccB) of Bacillus subtilis (strain 168).